A 122-amino-acid chain; its full sequence is Small ribosomal subunit protein uS13 (122 aa).

The tract at residues 92–122 (HRMGLPVRGQRTKTNARTRKGPSKPVSGKKK) is disordered. The segment covering 101–122 (QRTKTNARTRKGPSKPVSGKKK) has biased composition (basic residues).

Belongs to the universal ribosomal protein uS13 family. As to quaternary structure, part of the 30S ribosomal subunit. Forms a loose heterodimer with protein S19. Forms two bridges to the 50S subunit in the 70S ribosome.

In terms of biological role, located at the top of the head of the 30S subunit, it contacts several helices of the 16S rRNA. In the 70S ribosome it contacts the 23S rRNA (bridge B1a) and protein L5 of the 50S subunit (bridge B1b), connecting the 2 subunits; these bridges are implicated in subunit movement. Contacts the tRNAs in the A and P-sites. The polypeptide is Small ribosomal subunit protein uS13 (Ruminiclostridium cellulolyticum (strain ATCC 35319 / DSM 5812 / JCM 6584 / H10) (Clostridium cellulolyticum)).